Here is a 303-residue protein sequence, read N- to C-terminus: Sulfate adenylyltransferase subunit 2 (303 aa).

This sequence belongs to the PAPS reductase family. CysD subfamily. In terms of assembly, heterodimer composed of CysD, the smaller subunit, and CysN.

It catalyses the reaction sulfate + ATP + H(+) = adenosine 5'-phosphosulfate + diphosphate. Its pathway is sulfur metabolism; hydrogen sulfide biosynthesis; sulfite from sulfate: step 1/3. Functionally, with CysN forms the ATP sulfurylase (ATPS) that catalyzes the adenylation of sulfate producing adenosine 5'-phosphosulfate (APS) and diphosphate, the first enzymatic step in sulfur assimilation pathway. APS synthesis involves the formation of a high-energy phosphoric-sulfuric acid anhydride bond driven by GTP hydrolysis by CysN coupled to ATP hydrolysis by CysD. The sequence is that of Sulfate adenylyltransferase subunit 2 from Phocaeicola vulgatus (strain ATCC 8482 / DSM 1447 / JCM 5826 / CCUG 4940 / NBRC 14291 / NCTC 11154) (Bacteroides vulgatus).